Reading from the N-terminus, the 66-residue chain is Large ribosomal subunit protein bL35 (66 aa).

2 stretches are compositionally biased toward basic residues: residues 1-16 and 23-45; these read MPKF…RFKK and KRGH…RQLR. A disordered region spans residues 1-66; it reads MPKFKTHRAS…RIRQMLSQMK (66 aa).

This sequence belongs to the bacterial ribosomal protein bL35 family.

In Lacticaseibacillus casei (strain BL23) (Lactobacillus casei), this protein is Large ribosomal subunit protein bL35.